Here is a 129-residue protein sequence, read N- to C-terminus: uncharacterized protein (129 aa).

A run of 2 helical transmembrane segments spans residues 4 to 24 (FKFL…ILII) and 37 to 57 (VISL…DLSI).

The protein to B.burgdorferi BBF20.

Its subcellular location is the cell membrane. This is an uncharacterized protein from Borreliella burgdorferi (strain ATCC 35210 / DSM 4680 / CIP 102532 / B31) (Borrelia burgdorferi).